Here is a 294-residue protein sequence, read N- to C-terminus: MSTVTPSAPTLIIVSGLSGSGKSVALKTFEDQDYYCSDNLPINLLPDFVRSLLANHDGSAPRRLAVGIDVRGQADLSQLGDWRQLAADAGVDVKVLFFEASDETLLKRYADTRRRHPLSQLGLSLPEAIARERELTAPLRREADAVIDTSSLNVHQLRRRIITEFTMDHATGLSLLFESFAYKRGVPAEADFVFDARVLPNPHWDPDLRALSGREPGVRDYLEAQPDVQRYLAQLMDFLDTWLPKLGDGTRSYVTVAFGCTGGKHRSVFLAERLARHAREMGWEDVATYHREQD.

16–23 (GLSGSGKS) is an ATP binding site. 69-72 (DVRG) is a GTP binding site.

This sequence belongs to the RapZ-like family.

Functionally, displays ATPase and GTPase activities. In Stenotrophomonas maltophilia (strain K279a), this protein is Nucleotide-binding protein Smlt1108.